A 493-amino-acid chain; its full sequence is Protein dml1 (493 aa).

The protein belongs to the misato family.

It is found in the mitochondrion. Involved in the partitioning of the mitochondrial organelle and mitochondrial DNA (mtDNA) inheritance. The sequence is that of Protein dml1 (dml1) from Aspergillus oryzae (strain ATCC 42149 / RIB 40) (Yellow koji mold).